The chain runs to 394 residues: Acetate kinase (394 aa).

A Mg(2+)-binding site is contributed by N10. K17 serves as a coordination point for ATP. R87 is a substrate binding site. Residue D144 is the Proton donor/acceptor of the active site. Residues 204–208 (HLGNG), 279–281 (DMR), and 327–331 (GIGEN) contribute to the ATP site. E381 is a binding site for Mg(2+).

Belongs to the acetokinase family. As to quaternary structure, homodimer. It depends on Mg(2+) as a cofactor. Mn(2+) serves as cofactor.

It localises to the cytoplasm. It catalyses the reaction acetate + ATP = acetyl phosphate + ADP. The protein operates within metabolic intermediate biosynthesis; acetyl-CoA biosynthesis; acetyl-CoA from acetate: step 1/2. In terms of biological role, catalyzes the formation of acetyl phosphate from acetate and ATP. Can also catalyze the reverse reaction. The protein is Acetate kinase of Ectopseudomonas mendocina (strain ymp) (Pseudomonas mendocina).